The following is a 596-amino-acid chain: Aspartate--tRNA(Asp/Asn) ligase (596 aa).

Position 175 (Glu-175) interacts with L-aspartate. The interval 199 to 202 (QQYK) is aspartate. The L-aspartate site is built by Arg-221 and His-454. 221–223 (RDE) is a binding site for ATP. Residue Glu-488 coordinates ATP. Arg-495 serves as a coordination point for L-aspartate. 540-543 (GVDR) provides a ligand contact to ATP.

It belongs to the class-II aminoacyl-tRNA synthetase family. Type 1 subfamily. In terms of assembly, homodimer.

The protein resides in the cytoplasm. The catalysed reaction is tRNA(Asx) + L-aspartate + ATP = L-aspartyl-tRNA(Asx) + AMP + diphosphate. In terms of biological role, aspartyl-tRNA synthetase with relaxed tRNA specificity since it is able to aspartylate not only its cognate tRNA(Asp) but also tRNA(Asn). Reaction proceeds in two steps: L-aspartate is first activated by ATP to form Asp-AMP and then transferred to the acceptor end of tRNA(Asp/Asn). This Bartonella henselae (strain ATCC 49882 / DSM 28221 / CCUG 30454 / Houston 1) (Rochalimaea henselae) protein is Aspartate--tRNA(Asp/Asn) ligase.